A 284-amino-acid chain; its full sequence is Tryptophan 2,3-dioxygenase (284 aa).

Substrate is bound by residues 51–55 (FIIQH), Tyr-113, and Arg-117. Residue His-240 coordinates heme. Thr-254 contributes to the substrate binding site.

This sequence belongs to the tryptophan 2,3-dioxygenase family. In terms of assembly, homotetramer. The cofactor is heme.

It carries out the reaction L-tryptophan + O2 = N-formyl-L-kynurenine. The protein operates within amino-acid degradation; L-tryptophan degradation via kynurenine pathway; L-kynurenine from L-tryptophan: step 1/2. Functionally, heme-dependent dioxygenase that catalyzes the oxidative cleavage of the L-tryptophan (L-Trp) pyrrole ring and converts L-tryptophan to N-formyl-L-kynurenine. Catalyzes the oxidative cleavage of the indole moiety. The chain is Tryptophan 2,3-dioxygenase from Rhodococcus jostii (strain RHA1).